The primary structure comprises 276 residues: UPF0328 protein ECU01_0090/ECU01_1520/ECU02_1550/ECU08_0020 (276 aa).

A disordered region spans residues 1-24; sequence MGIIDVQRSHLTATPSKERDAPAH.

It belongs to the UPF0328 family.

The chain is UPF0328 protein ECU01_0090/ECU01_1520/ECU02_1550/ECU08_0020 from Encephalitozoon cuniculi (strain GB-M1) (Microsporidian parasite).